Reading from the N-terminus, the 338-residue chain is MASLHDLWFILVAVLFVGFFFLEGFDFGVGMATRFLGHNELERRVLINTIGPFWDANEVWLLTGAGAIFAAFPNWYATMLSGYYIPFVIVLLALMGRGVAFEFRGKVDHLKWVKVWDWVVFFGSLIPPFVLGVLFTTLFRGMPIDADMNIHAHVSDYINVYSILGGVTVTLLCFQHGLMFITLRTIGDLQNRARKMAQKIMGVVFVAVLAFAALSAYQTDMFTRRGEITIPLAVLIVICFMLAAVFIRKKKDGWTFGMTGAGLALTVGMIFISLFPRVMVSSLHSAYDLTVANASSGDYSLKVMSIAALTLLPFVIGSQIWSYYVFRKRVSHKEPMTY.

The next 9 membrane-spanning stretches (helical) occupy residues 7 to 27, 50 to 70, 75 to 95, 119 to 139, 163 to 183, 196 to 216, 227 to 247, 256 to 276, and 306 to 326; these read LWFILVAVLFVGFFFLEGFDF, IGPFWDANEVWLLTGAGAIFA, WYATMLSGYYIPFVIVLLALM, VVFFGSLIPPFVLGVLFTTLF, ILGGVTVTLLCFQHGLMFITL, MAQKIMGVVFVAVLAFAALSA, EITIPLAVLIVICFMLAAVFI, FGMTGAGLALTVGMIFISLFP, and IAALTLLPFVIGSQIWSYYVF.

This sequence belongs to the cytochrome ubiquinol oxidase subunit 2 family. As to quaternary structure, heterodimer of subunits I and II. Heme b serves as cofactor. Requires heme d cis-diol as cofactor.

It localises to the cell membrane. It carries out the reaction 2 a ubiquinol + O2(in) + 4 H(+)(in) = 2 a ubiquinone + 2 H2O(in) + 4 H(+)(out). This Bacillus subtilis (strain 168) protein is Cytochrome bd ubiquinol oxidase subunit 2 (cydB).